Reading from the N-terminus, the 466-residue chain is Uronate isomerase (466 aa).

This sequence belongs to the metallo-dependent hydrolases superfamily. Uronate isomerase family.

It carries out the reaction D-glucuronate = D-fructuronate. The enzyme catalyses aldehydo-D-galacturonate = keto-D-tagaturonate. It participates in carbohydrate metabolism; pentose and glucuronate interconversion. The polypeptide is Uronate isomerase (Lachnoclostridium phytofermentans (strain ATCC 700394 / DSM 18823 / ISDg) (Clostridium phytofermentans)).